The primary structure comprises 497 residues: Protein adenylyltransferase Fic (497 aa).

A disordered region spans residues 1–30 (MGATDQALEAESKTTEPPKTPPVPEQHDRP). A helical transmembrane segment spans residues 38-58 (LCHLLVLLFSGGLAAITLHIF). TPR repeat units follow at residues 123 to 156 (ALGALRLAQDMYLAGKDDKAARLFQHSLALAPRH) and 157 to 191 (PTVLLRYGEFLEHSQRNIVLADQYYFQALSISPSN). An Inhibitory (S/T)XXXE(G/N) motif motif is present at residues 248-253 (TVGIEG). ATP is bound by residues Glu-252 and 333 to 336 (VGGH). The region spanning 302-437 (ITIKDILELH…IRPFVRFIAD (136 aa)) is the Fido domain. His-380 is an active-site residue. Residues 384-391 (DGNGRTSR), 416-417 (YY), and Asn-424 each bind ATP. The disordered stretch occupies residues 468 to 497 (GEGVPQLQSSQMGGGASIPEFHESGSGSLP).

Belongs to the fic family. As to quaternary structure, homodimer.

It localises to the membrane. The catalysed reaction is L-tyrosyl-[protein] + ATP = O-(5'-adenylyl)-L-tyrosyl-[protein] + diphosphate. It catalyses the reaction L-threonyl-[protein] + ATP = 3-O-(5'-adenylyl)-L-threonyl-[protein] + diphosphate. It carries out the reaction 3-O-(5'-adenylyl)-L-threonyl-[protein] + H2O = L-threonyl-[protein] + AMP + H(+). Its activity is regulated as follows. The side chain of Glu-252 determines which of the two opposing activities (AMPylase or de-AMPylase) will take place. In response to endoplasmic reticulum stress, mediates de-AMPylase activity. Adenylyltransferase activity is inhibited by the inhibitory helix present at the N-terminus: Glu-252 binds ATP and competes with ATP-binding at Arg-391, thereby preventing adenylyltransferase activity. In unstressed cells, disengagement of Glu-252 promotes adenylyltransferase activity. Activation dissociates ATP-binding from Glu-252, allowing ordered binding of the entire ATP moiety with the alpha-phosphate in an orientation that is productive for accepting an incoming target hydroxyl side chain. In terms of biological role, protein that can both mediate the addition of adenosine 5'-monophosphate (AMP) to specific residues of target proteins (AMPylation), and the removal of the same modification from target proteins (de-AMPylation), depending on the context. The side chain of Glu-252 determines which of the two opposing activities (AMPylase or de-AMPylase) will take place. Acts as a key regulator of the unfolded protein response (UPR) by mediating AMPylation or de-AMPylation of Hsc70-3/BiP. In unstressed cells, acts as an adenylyltransferase by mediating AMPylation of Hsc70-3/BiP at 'Thr-518', thereby inactivating it. In response to endoplasmic reticulum stress, acts as a phosphodiesterase by mediating removal of ATP (de-AMPylation) from Hsc70-3/BiP at 'Thr-518', leading to restore HSPA5/BiP activity. The polypeptide is Protein adenylyltransferase Fic (Drosophila ananassae (Fruit fly)).